The following is a 315-amino-acid chain: Aspartate carbamoyltransferase catalytic subunit (315 aa).

Positions 61 and 62 each coordinate carbamoyl phosphate. Lys-90 lines the L-aspartate pocket. Positions 111, 139, and 142 each coordinate carbamoyl phosphate. Residues Arg-172 and Arg-234 each contribute to the L-aspartate site. Residues Leu-274 and Pro-275 each contribute to the carbamoyl phosphate site.

It belongs to the aspartate/ornithine carbamoyltransferase superfamily. ATCase family. As to quaternary structure, heterooligomer of catalytic and regulatory chains.

The enzyme catalyses carbamoyl phosphate + L-aspartate = N-carbamoyl-L-aspartate + phosphate + H(+). Its pathway is pyrimidine metabolism; UMP biosynthesis via de novo pathway; (S)-dihydroorotate from bicarbonate: step 2/3. Its function is as follows. Catalyzes the condensation of carbamoyl phosphate and aspartate to form carbamoyl aspartate and inorganic phosphate, the committed step in the de novo pyrimidine nucleotide biosynthesis pathway. This is Aspartate carbamoyltransferase catalytic subunit from Hyperthermus butylicus (strain DSM 5456 / JCM 9403 / PLM1-5).